A 203-amino-acid chain; its full sequence is Ribonuclease HII (203 aa).

An RNase H type-2 domain is found at 15-201; it reads LLVAGLDEAG…VAQAPLRFPE (187 aa). Aspartate 21, glutamate 22, and aspartate 111 together coordinate a divalent metal cation.

It belongs to the RNase HII family. Mn(2+) serves as cofactor. The cofactor is Mg(2+).

It localises to the cytoplasm. It carries out the reaction Endonucleolytic cleavage to 5'-phosphomonoester.. Its function is as follows. Endonuclease that specifically degrades the RNA of RNA-DNA hybrids. The polypeptide is Ribonuclease HII (Thermus thermophilus (strain ATCC BAA-163 / DSM 7039 / HB27)).